The sequence spans 345 residues: Fructose-bisphosphate aldolase (345 aa).

Serine 53 contributes to the D-glyceraldehyde 3-phosphate binding site. The Proton donor role is filled by aspartate 95. Residues histidine 96, aspartate 131, glutamate 161, and histidine 212 each coordinate Zn(2+). Residue glycine 213 participates in dihydroxyacetone phosphate binding. Histidine 252 contributes to the Zn(2+) binding site. Residues glycine 253–serine 255 and asparagine 274–threonine 277 each bind dihydroxyacetone phosphate.

This sequence belongs to the class II fructose-bisphosphate aldolase family. It depends on Zn(2+) as a cofactor.

The enzyme catalyses beta-D-fructose 1,6-bisphosphate = D-glyceraldehyde 3-phosphate + dihydroxyacetone phosphate. The protein operates within carbohydrate degradation; glycolysis; D-glyceraldehyde 3-phosphate and glycerone phosphate from D-glucose: step 4/4. In terms of biological role, catalyzes the aldol condensation of dihydroxyacetone phosphate (DHAP or glycerone-phosphate) with glyceraldehyde 3-phosphate (G3P) to form fructose 1,6-bisphosphate (FBP) in gluconeogenesis and the reverse reaction in glycolysis. The sequence is that of Fructose-bisphosphate aldolase (fba) from Mycobacterium leprae (strain TN).